The primary structure comprises 670 residues: Solute carrier organic anion transporter family member 1A6 (670 aa).

Topologically, residues 1–20 (MGEPGKRVGIHRVRCFAKIK) are cytoplasmic. Residues 21–40 (VFLLALIWAYISKILSGVYM) traverse the membrane as a helical segment. Residues 41–59 (STMLTQLERQFNISTSIVG) are Extracellular-facing. Asparagine 52 carries N-linked (GlcNAc...) asparagine glycosylation. Residues 60–80 (LINGSFEMGNLLVIVFVSYFG) traverse the membrane as a helical segment. The Cytoplasmic segment spans residues 81 to 86 (TKLHRP). A helical transmembrane segment spans residues 87–111 (IMIGVGCAVMGLGCFIISLPHFLMG). The Extracellular segment spans residues 112-155 (RYEYETTISPTSNLSSNSFLCVENRSQTLKPTQDPAECVKEIKS). N-linked (GlcNAc...) asparagine glycans are attached at residues asparagine 124 and asparagine 135. The helical transmembrane segment at 156–184 (LMWIYVLVGNIIRGIGETPIMPLGISYIE) threads the bilayer. The Cytoplasmic segment spans residues 185-203 (DFAKSENSPLYIGILEVGK). Residues 204-224 (MIGPILGYLMGPFCANIYVDT) traverse the membrane as a helical segment. Over 225–242 (GSVNTDDLTITPTDTRWV) the chain is Extracellular. Residues 243–267 (GAWWIGFLVCAGVNVLTSIPFFFFP) form a helical membrane-spanning segment. The Cytoplasmic segment spans residues 268–311 (KTLPKEGLQDNGDGTENAKEEKHRDKAKEENQGIIKEFFLMMKN). Residues 312–333 (LFCNPIYMLCVLTSVLQVNGVA) traverse the membrane as a helical segment. Over 334–353 (NIVIYKPKYLEHHFGISTAK) the chain is Extracellular. Residues 354–377 (AVFLIGLYTTPSVSAGYLISGFIM) traverse the membrane as a helical segment. Residues 378 to 381 (KKLK) lie on the Cytoplasmic side of the membrane. Residues 382-405 (ITLKKAAIIALCLFMSECLLSLCN) form a helical membrane-spanning segment. The Extracellular segment spans residues 406–513 (FMLTCDTTPI…PDCANKLQYF (108 aa)). In terms of domain architecture, Kazal-like spans 433-488 (NKFLSDCNTRCNCLTKTWDPVCGNNGLAYMSPCLAGCEKSVGTGANMVFQNCSCIR). Cystine bridges form between cysteine 439-cysteine 469, cysteine 445-cysteine 465, and cysteine 454-cysteine 486. 2 N-linked (GlcNAc...) asparagine glycosylation sites follow: asparagine 483 and asparagine 492. The chain crosses the membrane as a helical span at residues 514 to 536 (LIITVFCCFFYSLATIPGYMVFL). The Cytoplasmic portion of the chain corresponds to 537 to 545 (RCMKSEEKS). A helical membrane pass occupies residues 546 to 571 (LGIGLQAFFMRLFAGIPAPIYFGALI). The Extracellular portion of the chain corresponds to 572–605 (DRTCLHWGTLKCGEPGACRTYEVSSFRRLYLGLP). Residues 606-623 (AALRGSIILPSFFILRLI) traverse the membrane as a helical segment. The Cytoplasmic portion of the chain corresponds to 624-670 (RKLQIPGDTDSSEIELAETKPTEKESECTDMHKSSKVENDGELKTKL). The residue at position 632 (threonine 632) is a Phosphothreonine. A disordered region spans residues 633-670 (DSSEIELAETKPTEKESECTDMHKSSKVENDGELKTKL). Serine 634 and serine 635 each carry phosphoserine. Positions 640-670 (AETKPTEKESECTDMHKSSKVENDGELKTKL) are enriched in basic and acidic residues.

This sequence belongs to the organo anion transporter (TC 2.A.60) family. As to expression, kidney specific.

The protein resides in the cell membrane. In terms of biological role, may mediate the Na(+)-independent transport of organic anions. The sequence is that of Solute carrier organic anion transporter family member 1A6 (Slco1a6) from Mus musculus (Mouse).